The chain runs to 118 residues: Small ribosomal subunit protein uS17 (118 aa).

The protein belongs to the universal ribosomal protein uS17 family. As to quaternary structure, part of the 30S ribosomal subunit.

In terms of biological role, one of the primary rRNA binding proteins, it binds specifically to the 5'-end of 16S ribosomal RNA. This is Small ribosomal subunit protein uS17 from Methanopyrus kandleri (strain AV19 / DSM 6324 / JCM 9639 / NBRC 100938).